A 465-amino-acid polypeptide reads, in one-letter code: MFRLKTLPLLIFLHTQLANAFPVPEHLEEKNIKTAENYLRKFYNLPSNQFRSSRNATMVAEKLKEMQRFFSLAETGKLDAATMGIMEMPRCGVPDSGDFLLTPGSPKWTHTNLTYRIINHTPQLSRAEVKTAIEKAFHVWSVASPLTFTEILQGEADINIAFVSRDHGDNSPFDGPNGILAHAFQPGQGIGGDAHFDSEETWTQDSKNYNLFLVAAHEFGHSLGLSHSTDPGALMYPNYAYREPSTYSLPQDDINGIQTIYGPSDNPIQPTGPSTPKACDPHLRFDATTTLRGEIYFFKDKYFWRRHPQLRTVDLNFISLFWPFLPNGLQAAYEDFDRDLVFLFKGRQYWALSGYDLQQGYPRDISNYGFPRSVQAIDAAVSYNGKTYFFINNQCWRYDNQRRSMDPGYPKSIPSMFPGVNCRVDAVFLQDSFFLFFSGPQYFAFNFVSHRVTRVARSNLWLNCS.

Positions 1 to 20 (MFRLKTLPLLIFLHTQLANA) are cleaved as a signal peptide. The propeptide at 21–100 (FPVPEHLEEK…CGVPDSGDFL (80 aa)) is activation peptide. Asn55 carries an N-linked (GlcNAc...) asparagine glycan. A Cysteine switch motif is present at residues 89–96 (PRCGVPDS). Zn(2+) is bound at residue Cys91. The N-linked (GlcNAc...) asparagine glycan is linked to Asn112. Asp157 provides a ligand contact to Ca(2+). Residues His167 and Asp169 each contribute to the Zn(2+) site. Residues Asp174, Gly175, Asn177, and Ile179 each coordinate Ca(2+). Residue His182 participates in Zn(2+) binding. 3 residues coordinate Ca(2+): Gly189, Gly191, and Asp193. Residue His195 participates in Zn(2+) binding. Ca(2+)-binding residues include Asp197 and Glu200. His217 contributes to the Zn(2+) binding site. Glu218 is a catalytic residue. Zn(2+) contacts are provided by His221 and His227. Hemopexin repeat units follow at residues 276–325 (PKAC…WPFL), 326–372 (PNGL…GFPR), 374–420 (VQAI…FPGV), and 421–464 (NCRV…WLNC). Cysteines 279 and 464 form a disulfide. Asp286 serves as a coordination point for Ca(2+). Positions 378 and 425 each coordinate Ca(2+).

Belongs to the peptidase M10A family. Ca(2+) serves as cofactor. Zn(2+) is required as a cofactor. Neutrophils. Expressed in uterus. Low levels in kidney and muscle.

Its subcellular location is the cytoplasmic granule. It localises to the secreted. The protein localises to the extracellular space. The protein resides in the extracellular matrix. It carries out the reaction Cleavage of interstitial collagens in the triple helical domain. Unlike EC 3.4.24.7, this enzyme cleaves type III collagen more slowly than type I.. Cannot be activated without removal of the activation peptide. Activated by matrilysin. Can degrade fibrillar type I, II, and III collagens. May play a role in the degradation of collagen fibers during uterine involution. This chain is Neutrophil collagenase (Mmp8), found in Mus musculus (Mouse).